The following is a 142-amino-acid chain: Large ribosomal subunit protein uL13 (142 aa).

The protein belongs to the universal ribosomal protein uL13 family. As to quaternary structure, part of the 50S ribosomal subunit.

In terms of biological role, this protein is one of the early assembly proteins of the 50S ribosomal subunit, although it is not seen to bind rRNA by itself. It is important during the early stages of 50S assembly. The protein is Large ribosomal subunit protein uL13 of Vesicomyosocius okutanii subsp. Calyptogena okutanii (strain HA).